We begin with the raw amino-acid sequence, 72 residues long: Translation initiation factor IF-1 (72 aa).

Residues 1 to 72 form the S1-like domain; the sequence is MAKEDSIEMQ…SKGRIVFRSR (72 aa).

It belongs to the IF-1 family. In terms of assembly, component of the 30S ribosomal translation pre-initiation complex which assembles on the 30S ribosome in the order IF-2 and IF-3, IF-1 and N-formylmethionyl-tRNA(fMet); mRNA recruitment can occur at any time during PIC assembly.

It localises to the cytoplasm. Functionally, one of the essential components for the initiation of protein synthesis. Stabilizes the binding of IF-2 and IF-3 on the 30S subunit to which N-formylmethionyl-tRNA(fMet) subsequently binds. Helps modulate mRNA selection, yielding the 30S pre-initiation complex (PIC). Upon addition of the 50S ribosomal subunit IF-1, IF-2 and IF-3 are released leaving the mature 70S translation initiation complex. This is Translation initiation factor IF-1 from Aeromonas hydrophila subsp. hydrophila (strain ATCC 7966 / DSM 30187 / BCRC 13018 / CCUG 14551 / JCM 1027 / KCTC 2358 / NCIMB 9240 / NCTC 8049).